Here is a 587-residue protein sequence, read N- to C-terminus: Mitogen-activated protein kinase 4 (587 aa).

A Protein kinase domain is found at 20 to 312; it reads FVDFQPLGFG…AEMGLQHPYM (293 aa). ATP is bound by residues 26-34 and Lys49; that span reads LGFGVNGLV. Asp149 (proton acceptor) is an active-site residue. Ser186 bears the Phosphoserine; by PAK1, PAK2 and PAK3 mark. Residues 186–188 carry the SEG motif motif; the sequence is SEG. An FRIEDE motif motif is present at residues 328 to 333; sequence FRIEDE. Basic and acidic residues-rich tracts occupy residues 373-383 and 395-413; these read QDASEVQRDPR and VDPR…EQSH. A disordered region spans residues 373-413; that stretch reads QDASEVQRDPRAGSAPLAEDVQVDPRKDSHSSSERFLEQSH. At Ser434 the chain carries Phosphoserine. A disordered region spans residues 499–534; that stretch reads STQGGPEHASPPADDPERRLSASPPGRPAPVDGGAS.

It belongs to the protein kinase superfamily. CMGC Ser/Thr protein kinase family. MAP kinase subfamily. In terms of assembly, homodimer. Heterodimer with ERK3/MAPK6. Interacts with (via FRIEDE motif) MAPKAPK5. Mg(2+) is required as a cofactor. Post-translationally, phosphorylated at Ser-186 by PAK1, PAK2 and PAK3 resulting in catalytic activation. Phosphorylated by MAPKAPK5 at other sites. High expression in heart and brain.

Its subcellular location is the cytoplasm. The protein resides in the nucleus. It catalyses the reaction L-seryl-[protein] + ATP = O-phospho-L-seryl-[protein] + ADP + H(+). The catalysed reaction is L-threonyl-[protein] + ATP = O-phospho-L-threonyl-[protein] + ADP + H(+). Its activity is regulated as follows. Activated by phosphorylation at Ser-186. Functionally, atypical MAPK protein. Phosphorylates microtubule-associated protein 2 (MAP2) and MAPKAPK5. The precise role of the complex formed with MAPKAPK5 is still unclear, but the complex follows a complex set of phosphorylation events: upon interaction with atypical MAPKAPK5, ERK4/MAPK4 is phosphorylated at Ser-186 and then mediates phosphorylation and activation of MAPKAPK5, which in turn phosphorylates ERK4/MAPK4. May promote entry in the cell cycle. The polypeptide is Mitogen-activated protein kinase 4 (MAPK4) (Homo sapiens (Human)).